A 95-amino-acid chain; its full sequence is Putative pterin-4-alpha-carbinolamine dehydratase (95 aa).

It belongs to the pterin-4-alpha-carbinolamine dehydratase family.

The catalysed reaction is (4aS,6R)-4a-hydroxy-L-erythro-5,6,7,8-tetrahydrobiopterin = (6R)-L-erythro-6,7-dihydrobiopterin + H2O. The chain is Putative pterin-4-alpha-carbinolamine dehydratase from Solibacter usitatus (strain Ellin6076).